The primary structure comprises 155 residues: Riboflavin synthase (155 aa).

The protein belongs to the DMRL synthase family.

The enzyme catalyses 2 6,7-dimethyl-8-(1-D-ribityl)lumazine + H(+) = 5-amino-6-(D-ribitylamino)uracil + riboflavin. It functions in the pathway cofactor biosynthesis; riboflavin biosynthesis; riboflavin from 2-hydroxy-3-oxobutyl phosphate and 5-amino-6-(D-ribitylamino)uracil: step 2/2. This Aeropyrum pernix (strain ATCC 700893 / DSM 11879 / JCM 9820 / NBRC 100138 / K1) protein is Riboflavin synthase (ribC).